A 406-amino-acid chain; its full sequence is LIM/homeobox protein Lhx2 (406 aa).

LIM zinc-binding domains follow at residues 53 to 105 (CAGC…CKED) and 115 to 168 (CARC…CRLH). Residues 250–270 (DAEHLDRDQPYPSSQKTKRMR) are disordered. Positions 266–325 (TKRMRTSFKHHQLRTMKSYFAINHNPDAKDLKQLAQKTGLTKRVLQVWFQNARAKFRRNL) form a DNA-binding region, homeobox. Positions 307–323 (KRVLQVWFQNARAKFRR) match the Nuclear localization signal motif. Over residues 328 to 356 (QENTGVDKTSDATLQTGTPSGPASELSNA) the composition is skewed to polar residues. 2 disordered regions span residues 328 to 375 (QENT…SPTL) and 387 to 406 (GNLE…TNLF). Over residues 357–375 (SLSPSSTPTTLTDLTSPTL) the composition is skewed to low complexity. The span at 396-406 (SPSQTTLTNLF) shows a compositional bias: polar residues.

In terms of assembly, interacts (via LIM domains) with CITED2. Interacts with POU4F2 isoform 1.

Its subcellular location is the nucleus. In terms of biological role, acts as a transcriptional activator. Stimulates the promoter of the alpha-glycoprotein gene. Transcriptional regulatory protein involved in the control of cell differentiation in developing lymphoid and neural cell types. The sequence is that of LIM/homeobox protein Lhx2 (Lhx2) from Mus musculus (Mouse).